The sequence spans 497 residues: Glutamyl-tRNA(Gln) amidotransferase subunit A (497 aa).

Active-site charge relay system residues include Lys-91 and Ser-166. The interval 143-171 (SSTENSAYGPTHNPWDLERTAGGSGGGSS) is disordered. The Acyl-ester intermediate role is filled by Ser-190.

It belongs to the amidase family. GatA subfamily. As to quaternary structure, heterotrimer of A, B and C subunits.

The catalysed reaction is L-glutamyl-tRNA(Gln) + L-glutamine + ATP + H2O = L-glutaminyl-tRNA(Gln) + L-glutamate + ADP + phosphate + H(+). Functionally, allows the formation of correctly charged Gln-tRNA(Gln) through the transamidation of misacylated Glu-tRNA(Gln) in organisms which lack glutaminyl-tRNA synthetase. The reaction takes place in the presence of glutamine and ATP through an activated gamma-phospho-Glu-tRNA(Gln). The sequence is that of Glutamyl-tRNA(Gln) amidotransferase subunit A from Corynebacterium glutamicum (strain ATCC 13032 / DSM 20300 / JCM 1318 / BCRC 11384 / CCUG 27702 / LMG 3730 / NBRC 12168 / NCIMB 10025 / NRRL B-2784 / 534).